We begin with the raw amino-acid sequence, 1674 residues long: Kinesin-like protein KIF14 (1674 aa).

The interval 1-391 is required for PRC1-binding; that stretch reads MSVHTSHSRH…TEPDSLKVEN (391 aa). 2 disordered regions span residues 132–158 and 171–374; these read ETLN…KGVN and KDSN…PEEN. 2 stretches are compositionally biased toward polar residues: residues 142–151 and 202–214; these read GSDSASQASR and SRAP…QTEA. Serine 257 is subject to Phosphoserine. Threonine 262 carries the phosphothreonine modification. Residues 267–279 are compositionally biased toward basic and acidic residues; sequence VLEHRWTPRHDPP. A compositionally biased stretch (polar residues) spans 302–311; the sequence is TFRSASSESR. A compositionally biased stretch (basic and acidic residues) spans 317–329; sequence VPEHRWTPRHDLP. The required for microtubule-binding with high affinity stretch occupies residues 391-772; the sequence is NSQVTVAVRV…AAQRSNRNID (382 aa). A Kinesin motor domain is found at 393–736; it reads QVTVAVRVRP…LRYATQARLI (344 aa). 482 to 489 contacts ATP; sequence GQTGSGKS. A coiled-coil region spans residues 743–826; that stretch reads NEDMNAKLIR…QETKELQKAG (84 aa). The 52-residue stretch at 860–911 folds into the FHA domain; the sequence is TTVGKHTPSSSHDIQLSGVLIADDHCTIRNFGGTVSIVPAGEAKTYVNGTHI. Residues 936-1674 are required for CIT-binding; sequence PVEVQKGKKL…DCTPNRIQWV (739 aa). Residues 961 to 1110 are a coiled coil; that stretch reads EFAKNELLTA…VQMLQENRGN (150 aa). A phosphoserine mark is found at serine 973 and serine 1326. Residues 1618-1674 form a disordered region; the sequence is GLSKPWESCSSNSKEEQCKSDRADCGKSGPRRACEPHGDATPAVSSGDCTPNRIQWV. Basic and acidic residues predominate over residues 1630 to 1642; sequence SKEEQCKSDRADC. Polar residues predominate over residues 1660–1674; that stretch reads AVSSGDCTPNRIQWV.

This sequence belongs to the TRAFAC class myosin-kinesin ATPase superfamily. Kinesin family. As to quaternary structure, directly interacts with PRC1 within a complex also containing KIF4A, KIF20A and KIF23; targets to the central spindle. Directly interacts with CIT depending on the activation state of the kinase (stronger interaction with the kinase-dead form); targets to the midbody. Interacts with ARRB2; the interaction is detected in the nucleus upon OR1D2 stimulation. Interacts with AKT1; the interaction is detected in the plasma membrane upon INS stimulation and promotes AKT1 phosphorylation. Interacts with SVIL; at midbody during cytokinesis. Interacts with RADIL (via PDZ domain); recruits RADIL to the microtubule network restricting RADIL from interaction with activated RAP1A.

The protein resides in the nucleus. It localises to the cytoplasm. The protein localises to the cytoskeleton. Its subcellular location is the spindle. It is found in the midbody. In terms of biological role, microtubule motor protein that binds to microtubules with high affinity through each tubulin heterodimer and has an ATPase activity. Plays a role in many processes like cell division, cytokinesis and also in cell proliferation and apoptosis. During cytokinesis, targets to central spindle and midbody through its interaction with PRC1 and CIT respectively. Regulates cell growth through regulation of cell cycle progression and cytokinesis. During cell cycle progression acts through SCF-dependent proteasomal ubiquitin-dependent protein catabolic process which controls CDKN1B degradation, resulting in positive regulation of cyclins, including CCNE1, CCND1 and CCNB1. During late neurogenesis, regulates the cerebellar and cerebral cortex development and olfactory bulb development through regulation of apoptosis, cell proliferation and cell division. Also is required for chromosome congression and alignment during mitotic cell cycle process. Regulates cell spreading, focal adhesion dynamics, and cell migration through its interaction with RADIL resulting in regulation of RAP1A-mediated inside-out integrin activation by tethering RADIL on microtubules. The polypeptide is Kinesin-like protein KIF14 (Mus musculus (Mouse)).